A 481-amino-acid polypeptide reads, in one-letter code: ATP synthase subunit beta (481 aa).

An ATP-binding site is contributed by 160–167 (GGAGVGKT).

Belongs to the ATPase alpha/beta chains family. As to quaternary structure, F-type ATPases have 2 components, CF(1) - the catalytic core - and CF(0) - the membrane proton channel. CF(1) has five subunits: alpha(3), beta(3), gamma(1), delta(1), epsilon(1). CF(0) has three main subunits: a(1), b(2) and c(9-12). The alpha and beta chains form an alternating ring which encloses part of the gamma chain. CF(1) is attached to CF(0) by a central stalk formed by the gamma and epsilon chains, while a peripheral stalk is formed by the delta and b chains.

The protein resides in the cell inner membrane. The catalysed reaction is ATP + H2O + 4 H(+)(in) = ADP + phosphate + 5 H(+)(out). Functionally, produces ATP from ADP in the presence of a proton gradient across the membrane. The catalytic sites are hosted primarily by the beta subunits. The chain is ATP synthase subunit beta from Stigmatella aurantiaca.